Here is a 173-residue protein sequence, read N- to C-terminus: Crossover junction endodeoxyribonuclease RuvC (173 aa).

Active-site residues include aspartate 8, glutamate 67, and aspartate 139. Mg(2+) is bound by residues aspartate 8, glutamate 67, and aspartate 139.

It belongs to the RuvC family. Homodimer which binds Holliday junction (HJ) DNA. The HJ becomes 2-fold symmetrical on binding to RuvC with unstacked arms; it has a different conformation from HJ DNA in complex with RuvA. In the full resolvosome a probable DNA-RuvA(4)-RuvB(12)-RuvC(2) complex forms which resolves the HJ. Mg(2+) is required as a cofactor.

The protein localises to the cytoplasm. It catalyses the reaction Endonucleolytic cleavage at a junction such as a reciprocal single-stranded crossover between two homologous DNA duplexes (Holliday junction).. The RuvA-RuvB-RuvC complex processes Holliday junction (HJ) DNA during genetic recombination and DNA repair. Endonuclease that resolves HJ intermediates. Cleaves cruciform DNA by making single-stranded nicks across the HJ at symmetrical positions within the homologous arms, yielding a 5'-phosphate and a 3'-hydroxyl group; requires a central core of homology in the junction. The consensus cleavage sequence is 5'-(A/T)TT(C/G)-3'. Cleavage occurs on the 3'-side of the TT dinucleotide at the point of strand exchange. HJ branch migration catalyzed by RuvA-RuvB allows RuvC to scan DNA until it finds its consensus sequence, where it cleaves and resolves the cruciform DNA. In Salmonella paratyphi C (strain RKS4594), this protein is Crossover junction endodeoxyribonuclease RuvC.